We begin with the raw amino-acid sequence, 103 residues long: uncharacterized protein (103 aa).

Transmembrane regions (helical) follow at residues 42–62 (PFPLLRLLSVTLFISSLVLLA) and 65–85 (TGTLNIFSYSYVVMVVLFICA).

It localises to the membrane. This is an uncharacterized protein from Saccharomyces cerevisiae (strain ATCC 204508 / S288c) (Baker's yeast).